Reading from the N-terminus, the 420-residue chain is Tyrosine--tRNA ligase (420 aa).

Y36 contributes to the L-tyrosine binding site. The short motif at 41-50 (PTADSLHIGH) is the 'HIGH' region element. Y170 and Q174 together coordinate L-tyrosine. A 'KMSKS' region motif is present at residues 231-235 (KFGKS). Position 234 (K234) interacts with ATP. Residues 353–420 (TNIVEVLIET…KKKYFMVNYQ (68 aa)) form the S4 RNA-binding domain.

It belongs to the class-I aminoacyl-tRNA synthetase family. TyrS type 1 subfamily. In terms of assembly, homodimer.

The protein resides in the cytoplasm. The enzyme catalyses tRNA(Tyr) + L-tyrosine + ATP = L-tyrosyl-tRNA(Tyr) + AMP + diphosphate + H(+). Its function is as follows. Catalyzes the attachment of tyrosine to tRNA(Tyr) in a two-step reaction: tyrosine is first activated by ATP to form Tyr-AMP and then transferred to the acceptor end of tRNA(Tyr). In Staphylococcus aureus (strain COL), this protein is Tyrosine--tRNA ligase.